The sequence spans 309 residues: Probable lipid kinase YegS-like (309 aa).

The DAGKc domain occupies 1–133; it reads MPLTHIRLLL…IDIIRANNNY (133 aa). ATP-binding positions include serine 39, 65–71, and threonine 95; that span reads GDGSLNE. 3 residues coordinate Mg(2+): leucine 214, aspartate 217, and leucine 219. The Proton acceptor role is filled by glutamate 273.

The protein belongs to the diacylglycerol/lipid kinase family. YegS lipid kinase subfamily. The cofactor is Mg(2+). It depends on Ca(2+) as a cofactor.

It is found in the cytoplasm. Functionally, probably phosphorylates lipids; the in vivo substrate is unknown. This Shewanella frigidimarina (strain NCIMB 400) protein is Probable lipid kinase YegS-like.